Reading from the N-terminus, the 88-residue chain is Putative defensin-like protein 264 (88 aa).

Positions 1–26 (MEKMVLRKVVLLAILLSLSCLWVAKA) are cleaved as a signal peptide. Cystine bridges form between Cys47–Cys65, Cys53–Cys70, and Cys57–Cys72.

Belongs to the DEFL family.

The protein resides in the secreted. This is Putative defensin-like protein 264 from Arabidopsis thaliana (Mouse-ear cress).